We begin with the raw amino-acid sequence, 176 residues long: ATP synthase subunit delta (176 aa).

The protein belongs to the ATPase delta chain family. F-type ATPases have 2 components, F(1) - the catalytic core - and F(0) - the membrane proton channel. F(1) has five subunits: alpha(3), beta(3), gamma(1), delta(1), epsilon(1). F(0) has three main subunits: a(1), b(2) and c(10-14). The alpha and beta chains form an alternating ring which encloses part of the gamma chain. F(1) is attached to F(0) by a central stalk formed by the gamma and epsilon chains, while a peripheral stalk is formed by the delta and b chains.

It is found in the cell inner membrane. Functionally, f(1)F(0) ATP synthase produces ATP from ADP in the presence of a proton or sodium gradient. F-type ATPases consist of two structural domains, F(1) containing the extramembraneous catalytic core and F(0) containing the membrane proton channel, linked together by a central stalk and a peripheral stalk. During catalysis, ATP synthesis in the catalytic domain of F(1) is coupled via a rotary mechanism of the central stalk subunits to proton translocation. Its function is as follows. This protein is part of the stalk that links CF(0) to CF(1). It either transmits conformational changes from CF(0) to CF(1) or is implicated in proton conduction. This is ATP synthase subunit delta from Wolinella succinogenes (strain ATCC 29543 / DSM 1740 / CCUG 13145 / JCM 31913 / LMG 7466 / NCTC 11488 / FDC 602W) (Vibrio succinogenes).